Here is a 216-residue protein sequence, read N- to C-terminus: Protein InaA (216 aa).

Belongs to the protein kinase superfamily. KdkA/RfaP family.

In terms of biological role, may be an environmental sensor responsive to several stimuli, including internal pH, proton motive force, temperature, and possibly other unknown factors. The sequence is that of Protein InaA (inaA) from Escherichia coli (strain K12).